A 705-amino-acid polypeptide reads, in one-letter code: MASTLPPQTWEAGYARPADQASWEAETNYVAESGERAHWMLPVHTEPPTSTIGNGLGLTHLRTWPSIYDGTATGKPEWFKPSKEVDVLICGAGPFGLELGLILARQGISFRIVDKANAPCLSGRADGVHPRALEQLHAWGLAHEVSEEGPILNSTVLFRNGVKLFHGFSSTCDSRYKGIHIITQGQMERIYIRDLLRHQIVVERGTTVQHFNVQSTSQDHPVRATLKNVATGEEEVVRARYLIGADGAASSIREQLGVEFDGITTDIYWAIMDCRFKTDYPHILGFNIIISAEHGGSIVIPREDGYTRFYTQINGEKARKLQANRQARRNASTVGETRIDDHGITPDEVLEQLNKIIAPHKVEFASPMSWFSVWRVSERVARHFSSPDLRVHLGGDAAVLGAFGLNSSIYDAANLGWKLGLVLRKHAEPSILTTYDKERRLFANRVIRCSGAYLRFICNSSLPLAALRDLGEHLESHDENLPLLDGSTEADREFLYTFFKRHAMFLLGVEWPIVNSAICPADTKVRASSLRNGVRAPNPRVCLATDYTAYLYDKMMGVGRFHLLLFGSDLQGPVRQRLAVLAGELRKREGFYERFGGREMFNLILVVKTLSHQTAELLEGDLAPLKDHATTVYDDRAPDDDAHYWYGVNHARGALVVVRPDLAVGVSVWPEEIGKLNKYFASFLLECEETLPTKKSLLARLWDAL.

FAD-binding positions include 86 to 115 (DVLI…IVDK), Val-208, 308 to 310 (RFY), and Ser-408.

It belongs to the PheA/TfdB FAD monooxygenase family. Requires FAD as cofactor.

The protein operates within secondary metabolite biosynthesis. In terms of biological role, FAD-dependent monooxygenase; part of the cluster A that mediates the biosynthesis of azasperpyranones, members of the azaphilone family that exhibit anti-cancer activities. Azasperpyranones are synthesized by 2 clusters, A and B. Cluster A is responsible for the production of the polyhydric phenol moiety while the azaphilonoid scaffold is produced by the cluster B. The non-reducing polyketide synthase ATEG_03629 produces 5-methyl orsellinic acid, which is then reduced to 5-methyl orsellinic aldehyde by the NRPS-like protein ATEG_03630. 5-methyl orsellinic aldehyde is then first hydroxylated by the FAD-dependent monooxygenase ATEG_03635 and subsequently hydroxylated by the cytochrome P450 monooxygenase ATEG_03631 to produce the unstable polyhydric phenol precursor of azasperpyranones. On the other hand, the polyketide synthase ATEG_07659 is responsible for producing the 3,5-dimethyloctadienone moiety from acetyl-CoA, three malonyl-CoA, and two S-adenosyl methionines (SAM). The 3,5-dimethyloctadienone moiety is then loaded onto the SAT domain of ATEG_07661 and extended with four malonyl-CoA and one SAM, which leads to the formation of 2,4-dihydroxy-6-(5,7-dimethyl-2-oxo-trans-3-trans-5-nonadienyl)-3-methylbenzaldehyde (compound 8) after reductive release and aldol condensation. The FAD-dependent monooxygenase ATEG_07662 is the next enzyme in the biosynthesis sequence and hydroxylates the side chain at the benzylic position of compound 8. In Aspergillus nidulans, afoF, the ortholog of the FAD-dependent oxygenase ATEG_07660, is the key enzyme for the biosynthesis of asperfuranone by catalyzing the hydroxylation at C-8 of to prevent the formation of a six-membered ring hemiacetal intermediate and thus facilitating the formation of a five-membered ring to produce asperfuranone. In Aspergillus terreus, ATEG_07660 is probably not functional, which leads to the formation of the six-membered ring hemiacetal intermediate presperpyranone instead of asperfuranone. Finally, ATEG_03636 is involved in the condensation of the polyhydric phenol moiety produced by cluster A and the perasperpyranone precursor produced by cluster B, to yield azasperpyranone A. Further modifications of azasperpyranone A result in the production of derivatives, including azasperpyranone B to F. This Aspergillus terreus (strain NIH 2624 / FGSC A1156) protein is FAD-dependent monooxygenase ATEG_03635.